The sequence spans 457 residues: Siroheme synthase (457 aa).

The precorrin-2 dehydrogenase /sirohydrochlorin ferrochelatase stretch occupies residues 1–204 (MEIFPISLKL…DNLDIANQMM (204 aa)). NAD(+)-binding positions include 22 to 23 (HI) and 43 to 44 (PD). Phosphoserine is present on serine 129. A uroporphyrinogen-III C-methyltransferase region spans residues 216–457 (GEVYLVGAGP…VSLREQLQWL (242 aa)). Proline 225 is an S-adenosyl-L-methionine binding site. Catalysis depends on aspartate 248, which acts as the Proton acceptor. The Proton donor role is filled by lysine 270. S-adenosyl-L-methionine-binding positions include 301-303 (GGD), isoleucine 306, 331-332 (TA), methionine 383, and glycine 412.

This sequence in the N-terminal section; belongs to the precorrin-2 dehydrogenase / sirohydrochlorin ferrochelatase family. It in the C-terminal section; belongs to the precorrin methyltransferase family.

The enzyme catalyses uroporphyrinogen III + 2 S-adenosyl-L-methionine = precorrin-2 + 2 S-adenosyl-L-homocysteine + H(+). The catalysed reaction is precorrin-2 + NAD(+) = sirohydrochlorin + NADH + 2 H(+). It carries out the reaction siroheme + 2 H(+) = sirohydrochlorin + Fe(2+). It functions in the pathway cofactor biosynthesis; adenosylcobalamin biosynthesis; precorrin-2 from uroporphyrinogen III: step 1/1. The protein operates within cofactor biosynthesis; adenosylcobalamin biosynthesis; sirohydrochlorin from precorrin-2: step 1/1. Its pathway is porphyrin-containing compound metabolism; siroheme biosynthesis; precorrin-2 from uroporphyrinogen III: step 1/1. It participates in porphyrin-containing compound metabolism; siroheme biosynthesis; siroheme from sirohydrochlorin: step 1/1. It functions in the pathway porphyrin-containing compound metabolism; siroheme biosynthesis; sirohydrochlorin from precorrin-2: step 1/1. Its function is as follows. Multifunctional enzyme that catalyzes the SAM-dependent methylations of uroporphyrinogen III at position C-2 and C-7 to form precorrin-2 via precorrin-1. Then it catalyzes the NAD-dependent ring dehydrogenation of precorrin-2 to yield sirohydrochlorin. Finally, it catalyzes the ferrochelation of sirohydrochlorin to yield siroheme. The sequence is that of Siroheme synthase from Acinetobacter baylyi (strain ATCC 33305 / BD413 / ADP1).